A 179-amino-acid polypeptide reads, in one-letter code: Nicotinamide-nucleotide adenylyltransferase (179 aa).

Belongs to the archaeal NMN adenylyltransferase family.

Its subcellular location is the cytoplasm. It carries out the reaction beta-nicotinamide D-ribonucleotide + ATP + H(+) = diphosphate + NAD(+). Its pathway is cofactor biosynthesis; NAD(+) biosynthesis; NAD(+) from nicotinamide D-ribonucleotide: step 1/1. The polypeptide is Nicotinamide-nucleotide adenylyltransferase (Thermoplasma acidophilum (strain ATCC 25905 / DSM 1728 / JCM 9062 / NBRC 15155 / AMRC-C165)).